A 398-amino-acid chain; its full sequence is Probable sugar efflux transporter (398 aa).

12 helical membrane-spanning segments follow: residues 15 to 35, 50 to 70, 81 to 101, 103 to 123, 136 to 156, 169 to 189, 209 to 229, 246 to 266, 275 to 295, 301 to 321, 333 to 353, and 364 to 384; these read VVTL…PVGL, VGIM…PFML, LIGL…AWNF, VLVI…SITA, AQAL…GLPI, TFFA…KLLP, PALM…YTAY, FATV…VLFG, LLVS…MPAA, LAIL…GMQV, VAMS…ALVG, and AIGY…ILIF.

It belongs to the major facilitator superfamily. SotB (TC 2.A.1.2) family.

Its subcellular location is the cell inner membrane. In terms of biological role, involved in the efflux of sugars. The physiological role may be the reduction of the intracellular concentration of toxic sugars or sugar metabolites. The protein is Probable sugar efflux transporter of Enterobacter sp. (strain 638).